Consider the following 112-residue polypeptide: UPF0060 membrane protein XOO1694 (112 aa).

4 helical membrane-spanning segments follow: residues 8-28, 32-52, 62-82, and 92-112; these read LLLF…PYLW, GGSV…VWLL, VYAA…LWWV, and LLGA…PRSA.

This sequence belongs to the UPF0060 family.

It localises to the cell inner membrane. In Xanthomonas oryzae pv. oryzae (strain MAFF 311018), this protein is UPF0060 membrane protein XOO1694.